The primary structure comprises 62 residues: Large ribosomal subunit protein bL28 (62 aa).

The protein belongs to the bacterial ribosomal protein bL28 family.

The polypeptide is Large ribosomal subunit protein bL28 (Staphylococcus epidermidis (strain ATCC 12228 / FDA PCI 1200)).